Consider the following 372-residue polypeptide: Erythronate-4-phosphate dehydrogenase (372 aa).

Substrate-binding residues include serine 45 and threonine 66. Aspartate 146 is an NAD(+) binding site. Arginine 209 is an active-site residue. Aspartate 233 lines the NAD(+) pocket. The active site involves glutamate 238. Catalysis depends on histidine 255, which acts as the Proton donor. Position 258 (glycine 258) interacts with NAD(+). Tyrosine 259 provides a ligand contact to substrate.

It belongs to the D-isomer specific 2-hydroxyacid dehydrogenase family. PdxB subfamily. As to quaternary structure, homodimer.

The protein resides in the cytoplasm. It catalyses the reaction 4-phospho-D-erythronate + NAD(+) = (R)-3-hydroxy-2-oxo-4-phosphooxybutanoate + NADH + H(+). Its pathway is cofactor biosynthesis; pyridoxine 5'-phosphate biosynthesis; pyridoxine 5'-phosphate from D-erythrose 4-phosphate: step 2/5. Functionally, catalyzes the oxidation of erythronate-4-phosphate to 3-hydroxy-2-oxo-4-phosphonooxybutanoate. This chain is Erythronate-4-phosphate dehydrogenase, found in Blochmanniella floridana.